The sequence spans 316 residues: Beta-ketoacyl-[acyl-carrier-protein] synthase III 1 (316 aa).

Catalysis depends on residues Cys112 and His243. An ACP-binding region spans residues 244-248; that stretch reads QANYR. The active site involves Asn273.

The protein belongs to the thiolase-like superfamily. FabH family. Homodimer.

The protein localises to the cytoplasm. The catalysed reaction is malonyl-[ACP] + acetyl-CoA + H(+) = 3-oxobutanoyl-[ACP] + CO2 + CoA. Its pathway is lipid metabolism; fatty acid biosynthesis. Catalyzes the condensation reaction of fatty acid synthesis by the addition to an acyl acceptor of two carbons from malonyl-ACP. Catalyzes the first condensation reaction which initiates fatty acid synthesis and may therefore play a role in governing the total rate of fatty acid production. Possesses both acetoacetyl-ACP synthase and acetyl transacylase activities. Its substrate specificity determines the biosynthesis of branched-chain and/or straight-chain of fatty acids. This Vibrio vulnificus (strain YJ016) protein is Beta-ketoacyl-[acyl-carrier-protein] synthase III 1.